Reading from the N-terminus, the 328-residue chain is Tyrosine--tRNA ligase (328 aa).

An L-tyrosine-binding site is contributed by Tyr-33. The short motif at 38-46 (PSGVLHIGH) is the 'HIGH' region element. L-tyrosine contacts are provided by Tyr-154, Gln-158, Asp-161, and Gln-176. The tract at residues 193–227 (EPPTSLHTPLIADLGTGRGKMSSSEGVTISMEDSR) is disordered. Residues 212–216 (KMSSS) carry the 'KMSKS' region motif. Ser-215 contributes to the ATP binding site.

This sequence belongs to the class-I aminoacyl-tRNA synthetase family. TyrS type 3 subfamily. In terms of assembly, homodimer.

The protein localises to the cytoplasm. The catalysed reaction is tRNA(Tyr) + L-tyrosine + ATP = L-tyrosyl-tRNA(Tyr) + AMP + diphosphate + H(+). In terms of biological role, catalyzes the attachment of tyrosine to tRNA(Tyr) in a two-step reaction: tyrosine is first activated by ATP to form Tyr-AMP and then transferred to the acceptor end of tRNA(Tyr). The protein is Tyrosine--tRNA ligase of Halorubrum lacusprofundi (strain ATCC 49239 / DSM 5036 / JCM 8891 / ACAM 34).